A 255-amino-acid chain; its full sequence is Ribosomal RNA small subunit methyltransferase G (255 aa).

Residues G89, F94, 112-114 (DST), 140-141 (VE), and R159 contribute to the S-adenosyl-L-methionine site.

Belongs to the methyltransferase superfamily. RNA methyltransferase RsmG family.

It is found in the cytoplasm. Specifically methylates the N7 position of a guanine in 16S rRNA. This is Ribosomal RNA small subunit methyltransferase G from Trichodesmium erythraeum (strain IMS101).